The chain runs to 37 residues: Toxin Bcg III 28.78 (37 aa).

An intrachain disulfide couples Cys-6 to Cys-31.

It is found in the secreted. It localises to the nematocyst. This chain is Toxin Bcg III 28.78, found in Bunodosoma cangicum (Sea anemone).